The primary structure comprises 305 residues: Protoheme IX farnesyltransferase 1 (305 aa).

9 consecutive transmembrane segments (helical) span residues I30–F50, L59–M79, F108–S128, F129–W149, H154–V176, L180–L202, L232–F252, L253–A273, and F284–F304.

It belongs to the UbiA prenyltransferase family. Protoheme IX farnesyltransferase subfamily. In terms of assembly, interacts with CtaA.

Its subcellular location is the cell membrane. The catalysed reaction is heme b + (2E,6E)-farnesyl diphosphate + H2O = Fe(II)-heme o + diphosphate. It functions in the pathway porphyrin-containing compound metabolism; heme O biosynthesis; heme O from protoheme: step 1/1. Functionally, converts heme B (protoheme IX) to heme O by substitution of the vinyl group on carbon 2 of heme B porphyrin ring with a hydroxyethyl farnesyl side group. The protein is Protoheme IX farnesyltransferase 1 of Lysinibacillus sphaericus (strain C3-41).